Reading from the N-terminus, the 225-residue chain is Platelet-activating factor acetylhydrolase IB subunit beta homolog (225 aa).

Belongs to the 'GDSL' lipolytic enzyme family. Platelet-activating factor acetylhydrolase IB beta/gamma subunits subfamily. In terms of assembly, does not interact with Lis-1.

In Drosophila melanogaster (Fruit fly), this protein is Platelet-activating factor acetylhydrolase IB subunit beta homolog (Paf-AHalpha).